The sequence spans 462 residues: Protein Tube (462 aa).

A Death domain is found at 27–152; the sequence is YSRNTELRRV…SAADFVALDF (126 aa). Residues 218–265 form a disordered region; it reads RDKSVPQPSGNTPPIAPPRRQQRSTTNSNFATLTGTGTTSTTIPNVPN. Over residues 249 to 259 the composition is skewed to low complexity; that stretch reads TLTGTGTTSTT. 2 repeat units span residues 262-269 and 286-293. The 5 X approximate repeats stretch occupies residues 262-460; the sequence is NVPNLTILNP…ACNIPDLSEL (199 aa). The span at 301–317 shows a compositional bias: polar residues; that stretch reads RATVSDNPSNRTSSTDP. The interval 301–462 is disordered; that stretch reads RATVSDNPSN…NIPDLSELQQ (162 aa). Repeat unit 3 spans residues 319–326; sequence NIPRITLL. The segment covering 342–354 has biased composition (low complexity); the sequence is AKASTATTSTASS. Polar residues predominate over residues 355-367; it reads NNLPMISALNISK. Repeat unit 4 spans residues 356-363; it reads NLPMISAL. The span at 368 to 377 shows a compositional bias: basic and acidic residues; the sequence is GSRETLRPES. Over residues 387-403 the composition is skewed to acidic residues; the sequence is DDDDDNDGEEDGEEEYP. The segment covering 409 to 424 has biased composition (low complexity); the sequence is NLSNSEQQSSNNDSSL. Polar residues predominate over residues 425–438; that stretch reads TTVTGTSGDNSFEL. Residues 439-449 show a composition bias toward low complexity; that stretch reads TNDSSSTSNDD. Copy 5 of the repeat occupies 453-460; it reads NIPDLSEL.

As to quaternary structure, interacts (via Death domain) with pll (via Death domain). Post-translationally, phosphorylated by pll.

It is found in the cytoplasm. It localises to the cell membrane. Functionally, plays an essential role in the Tl receptor signaling pathway that establishes embryonic dorsoventral polarity; the signal directs import of dl into ventral and ventrolateral nuclei, thereby establishing dorsoventral polarity. Tub recruits pll to the plasma membrane and protein-protein interaction activates pll. Also has a role in pupal pattern formation. This Drosophila melanogaster (Fruit fly) protein is Protein Tube (tub).